Here is a 207-residue protein sequence, read N- to C-terminus: Large ribosomal subunit protein uL4 (207 aa).

Residues 54 to 74 (RSDVRGGGKKPYRQKGTGNAR) form a disordered region.

The protein belongs to the universal ribosomal protein uL4 family. As to quaternary structure, part of the 50S ribosomal subunit.

Functionally, one of the primary rRNA binding proteins, this protein initially binds near the 5'-end of the 23S rRNA. It is important during the early stages of 50S assembly. It makes multiple contacts with different domains of the 23S rRNA in the assembled 50S subunit and ribosome. In terms of biological role, forms part of the polypeptide exit tunnel. This Magnetococcus marinus (strain ATCC BAA-1437 / JCM 17883 / MC-1) protein is Large ribosomal subunit protein uL4.